An 87-amino-acid chain; its full sequence is Small ribosomal subunit protein uS12m (87 aa).

Belongs to the universal ribosomal protein uS12 family.

The protein localises to the mitochondrion matrix. It localises to the kinetoplast. In terms of biological role, protein S12 is involved in the translation initiation step. In Trypanoplasma borreli, this protein is Small ribosomal subunit protein uS12m (RPS12).